The chain runs to 541 residues: Nif-specific regulatory protein (541 aa).

One can recognise a GAF domain in the interval 23-158 (RLETTLNNFV…MAANLAGRAI (136 aa)). Residues 170–191 (TFAEEQQEQQNSRDEQSQSSAR) are disordered. Residues 200 to 428 (IIGESTALMT…LENCVRRTAT (229 aa)) enclose the Sigma-54 factor interaction domain. ATP contacts are provided by residues 228-235 (GETGTGKE) and 291-300 (ANGGTLLLDE). An inter-domain linker region spans residues 429-498 (LARSKTITSS…SAGVASNLIE (70 aa)). Residues cysteine 442 and cysteine 447 each contribute to the a divalent metal cation site. Positions 499 to 541 (RDRLISALEEAGWNQAKAARILEKTPRQVGYALRRHGVDVRKL) are C-terminal DNA-binding domain. The segment at residues 513–532 (QAKAARILEKTPRQVGYALR) is a DNA-binding region (H-T-H motif).

Interacts with sigma-54.

In terms of biological role, required for activation of most nif operons, which are directly involved in nitrogen fixation. In Rhizobium meliloti (strain 1021) (Ensifer meliloti), this protein is Nif-specific regulatory protein (nifA).